The chain runs to 178 residues: Prion-like protein doppel (178 aa).

A signal peptide spans 1-25 (MRKHLGGCWLAIVCILLFSQLCSVK). The segment at 27–50 (RGIKHRIKWNRKVLPSTSQVTEAR) is flexible tail. Residues 51-154 (TAEIRPGAFI…KHCDFWLERG (104 aa)) form a globular region. 2 disulfides stabilise this stretch: Cys-94/Cys-147 and Cys-108/Cys-142. N-linked (GlcNAc...) asparagine glycans are attached at residues Asn-98 and Asn-110. Residues 124 to 141 (KQDNKLYQRVLWQLIREL) form a cu(2+) binding region. Residue Gly-154 is the site of GPI-anchor amidated glycine attachment. The propeptide at 155 to 178 (AGLRVTLDQPMMLCLLVFIWFIVK) is removed in mature form.

This sequence belongs to the prion family. Post-translationally, N-glycosylated. O-glycosylated. As to expression, strongly expressed in testis. Detected at low levels in ovary, spleen, kidney and mammary gland.

It is found in the cell membrane. Required for normal acrosome reaction and for normal male fertility. Can bind Cu(2+). This Bos taurus (Bovine) protein is Prion-like protein doppel (PRND).